The sequence spans 26 residues: Conotoxin Eb6.18 (26 aa).

Disulfide bonds link cysteine 7/cysteine 18 and cysteine 13/cysteine 25.

It belongs to the conotoxin O1 superfamily. As to expression, expressed by the venom duct.

The protein localises to the secreted. The chain is Conotoxin Eb6.18 (E1) from Conus ebraeus (Hebrew cone).